The primary structure comprises 301 residues: Oxygen-dependent coproporphyrinogen-III oxidase (301 aa).

Serine 94 lines the substrate pocket. A divalent metal cation is bound by residues histidine 98 and histidine 108. Catalysis depends on histidine 108, which acts as the Proton donor. Residue 110–112 (NVR) participates in substrate binding. 2 residues coordinate a divalent metal cation: histidine 147 and histidine 177. Positions 242 to 277 (YVEFNLVYDRGTLFGLQSGGRTESILMSMPPLARWE) are important for dimerization. 260-262 (GGR) is a binding site for substrate.

This sequence belongs to the aerobic coproporphyrinogen-III oxidase family. Homodimer. A divalent metal cation serves as cofactor.

It localises to the cytoplasm. The enzyme catalyses coproporphyrinogen III + O2 + 2 H(+) = protoporphyrinogen IX + 2 CO2 + 2 H2O. It functions in the pathway porphyrin-containing compound metabolism; protoporphyrin-IX biosynthesis; protoporphyrinogen-IX from coproporphyrinogen-III (O2 route): step 1/1. In terms of biological role, involved in the heme biosynthesis. Catalyzes the aerobic oxidative decarboxylation of propionate groups of rings A and B of coproporphyrinogen-III to yield the vinyl groups in protoporphyrinogen-IX. This is Oxygen-dependent coproporphyrinogen-III oxidase from Photobacterium profundum (strain SS9).